The sequence spans 1856 residues: MIPQWIPQNIQKRLLLYVLQQLSLFSEIDLPNLEEVSLNNIILKDVALDPEKVGKLPGCNLRYGQIGSLELTTISGISGVNIDVNDAEIVISPDFDIDENMTNQVAFSLAQSTANLANTIMLNTNDGSDMNETSDPASEDDDEDDIDDKITKPIPPKRRTSSVTGNKTTALGGVMQKAVEIALSRLSIKVNSLKIKIVSDLTDLQMEVDSVSINSTNGTRTVSIKGVKLRTLKPNVNPGEGFQSGHAPQKKQQGSDNDSPTDANKHGSENDNDDDDDDYGNESLMDSMVFSHEEASSIYMSATSRSFEKSAASGIPGEVDNKATDKEDYSEDPPIIFYMDDCTIEFDGLSTISNLEIEVGNINLAFTPLTPTLVSIFQGVAKSLKIKYYQQKKKTKSRSAQRNEKFPQYTNDNDEIPEDQSESDDASHEPFFNRFKVNSFVISATSALSENGLFANKNGINIIFFNINIKQKNELLLYGGVETFKIIRFEDDNTYEIFHFDKPQSAPSSAPSYSGSNDVAGTSSSLSSSTGSATSKADIRFEVFKKSEESDDLEVTVLMAKSAHFNFDLQSLLILSNFAKAVSSIYDEYGLLKSVIDKLDTRDKKWSGGTNNSKMSSKSEFILQTATIFVNFIISDDCQLQLIVFPIKFNLRQEQLTISKILLNCTNGDTQVEGVIILTDVSLITKNQEFRAYFQSTNTTTSANTHPLPRKTTMNSKLSVIVQKFSSNVSMDRLKFIGEKLKNFSNEFIERSPTQSNSLENSFLNEPVERQRLESSLHMNSSLFSTRRPGRRLGLGFNNSPSVFLGSTRVTMASFQVCFKEATFNITGVFPKFGNFSVQMSDISFYKLKNDILGHILSVSVQRKKGDLVENLIHQYQDLSPNSLEFPLLSIKCKLGDKTTKIEITARNLVLEYYTNWLLLMDKEESIIDAVEEEIIEKVTPSQHSSSQNKLDIRYSMYDCMVGLTPGRLSCKSYLIIGKGDSDISFGVDQFYVKCSFRNISMVLIDDTKNILPFSEPSTSSSSSSSSATRQTPYVYIQPLDYYSKLGYIHLGLINVAHVGITFNTDIEALKDRNEKLGIKDSLTFVDLKTNLDECQFNLCADTANTLIQLVNDLKLPLNFKDEDKMKVDFADGINVMQGIDQNIFKGLTETLTELNLNGTENGSTSESSSQEASSLMFEEGHFDRGNRSLYDNSHVDPLHININLSKVKIYLHDGYDWKDTRKAIRGAVKNFETAQTAKTVAKEKEKKRKVEFETRDIEVQEDVFQETLFQSIHVVAPRNQNARDMATSINLDLQNDKDGESRDVSTANSGKSYKNLKLRRSAKHKLLFDLKSIEVGVNVYSTRDPRRDKTDENMKYELLNFIELRVGTVDIYDNVSTSTWNKFLSYMNILGDREIGTSMVKVSILNVRPDPAMVSGEAIMNVSVLPLRLHIDQDALDFLVRFFEFKDERFELPPDEMVYIQKFEISSIKLKLDYKPKKVDYAGLRSGKAGEFANFFTLDGSTLTLPKVKLFGIPGAPKIGIGLGRAWLPVFQSTQVIGIISGVSPLRSVVNIGGGFKDLVAIPISEYKKDGRLWRSIQKGTVSFAKTTGYEILNLGVKLASGTQVLLEQGEEMLGGEGSSVRSPNLGGSDNRRNSNASDELPVEVAKPKSQNNLLVSSQILNKASTKIETHSYDTKKLYSNIELDDEDMDDNRINGINKELLSKSIFLLAPAEEKLAKLQPHTKGNHEGLTEEEEDEDEDEEYQLYAYENEEELQEKLVSLYSNQPETIEQGLKSAYKSLGTNFKLTKKQLLKLRRELAETDTIQDSMVTVLKNSPIILMRPLIGSTEAVSKLLMGVGNQIDGKKLVEKKDKYPT.

Disordered stretches follow at residues 123–167 (NTND…TGNK), 229–283 (LRTL…GNES), 309–328 (KSAA…DKED), 395–428 (TKSR…DASH), 1157–1177 (LNGT…SSLM), 1614–1647 (MLGG…VEVA), and 1719–1741 (KLQP…EDED). Residues 137–147 (ASEDDDEDDID) show a composition bias toward acidic residues. Polar residues predominate over residues 250–262 (KKQQGSDNDSPTD). Positions 270–280 (NDNDDDDDDYG) are enriched in acidic residues. Residues 412–424 (DNDEIPEDQSESD) show a composition bias toward acidic residues. Positions 1157 to 1170 (LNGTENGSTSESSS) are enriched in low complexity. The segment covering 1621–1639 (SVRSPNLGGSDNRRNSNAS) has biased composition (polar residues). A compositionally biased stretch (acidic residues) spans 1732-1741 (TEEEEDEDED).

The protein belongs to the ATG2 family.

It is found in the preautophagosomal structure membrane. Its subcellular location is the endoplasmic reticulum membrane. The enzyme catalyses a 1,2-diacyl-sn-glycero-3-phosphocholine(in) = a 1,2-diacyl-sn-glycero-3-phosphocholine(out). The catalysed reaction is a 1,2-diacyl-sn-glycero-3-phospho-L-serine(in) = a 1,2-diacyl-sn-glycero-3-phospho-L-serine(out). It catalyses the reaction a 1,2-diacyl-sn-glycero-3-phosphoethanolamine(in) = a 1,2-diacyl-sn-glycero-3-phosphoethanolamine(out). Lipid transfer protein required for autophagosome completion and peroxisome degradation. Tethers the edge of the isolation membrane (IM) to the endoplasmic reticulum (ER) and mediates direct lipid transfer from ER to IM for IM expansion. ATG2/SPO72 binds to the ER exit site (ERES), which is the membrane source for autophagosome formation, using basic residues in its N-terminal region (NR) and to the expanding edge of the IM through its C-terminal region. The latter binding is assisted by an ATG18-PtdIns3P interaction. ATG2/SPO72 then extracts phospholipids from the membrane source using its NR and transfers them to ATG9 to the IM through its predicted beta-sheet-rich structure for membrane expansion. The protein is Autophagy-related protein 2 (SPO72) of Candida albicans (strain SC5314 / ATCC MYA-2876) (Yeast).